Here is a 625-residue protein sequence, read N- to C-terminus: Arginine--tRNA ligase (625 aa).

Positions 117-127 (ANPIHPLHIGH) match the 'HIGH' region motif.

It belongs to the class-I aminoacyl-tRNA synthetase family.

It is found in the cytoplasm. The catalysed reaction is tRNA(Arg) + L-arginine + ATP = L-arginyl-tRNA(Arg) + AMP + diphosphate. This chain is Arginine--tRNA ligase, found in Saccharolobus solfataricus (strain ATCC 35092 / DSM 1617 / JCM 11322 / P2) (Sulfolobus solfataricus).